A 416-amino-acid chain; its full sequence is Tyrosine--tRNA ligase (416 aa).

Residue tyrosine 40 participates in L-tyrosine binding. The 'HIGH' region motif lies at 45 to 54 (ATAASLHVGH). The L-tyrosine site is built by tyrosine 177 and glutamine 181. Positions 237 to 241 (KMGKS) match the 'KMSKS' region motif. Position 240 (lysine 240) interacts with ATP. The S4 RNA-binding domain maps to 351–416 (LSVAHFLVAA…RKKHKLVRLS (66 aa)).

The protein belongs to the class-I aminoacyl-tRNA synthetase family. TyrS type 1 subfamily. In terms of assembly, homodimer.

It localises to the cytoplasm. It catalyses the reaction tRNA(Tyr) + L-tyrosine + ATP = L-tyrosyl-tRNA(Tyr) + AMP + diphosphate + H(+). In terms of biological role, catalyzes the attachment of tyrosine to tRNA(Tyr) in a two-step reaction: tyrosine is first activated by ATP to form Tyr-AMP and then transferred to the acceptor end of tRNA(Tyr). The protein is Tyrosine--tRNA ligase of Cereibacter sphaeroides (strain ATCC 17029 / ATH 2.4.9) (Rhodobacter sphaeroides).